Consider the following 106-residue polypeptide: MVNVPKTRRTFCKKCGKHQPHKVTQYKKGKDSLYAQGKRRYDRKQSGYGGQTKPIFRKKAKTTKKIVLRLECVEPNCRSKRMLAIKRCKHFELGGDKKRKGQVIQF.

The segment at 34–53 (YAQGKRRYDRKQSGYGGQTK) is disordered.

The protein belongs to the eukaryotic ribosomal protein eL42 family. In terms of assembly, component of the large ribosomal subunit.

The protein localises to the cytoplasm. Functionally, component of the large ribosomal subunit. The ribosome is a large ribonucleoprotein complex responsible for the synthesis of proteins in the cell. In Canis lupus familiaris (Dog), this protein is Large ribosomal subunit protein eL42 (Rpl36a).